The primary structure comprises 713 residues: Protein argonaute (713 aa).

Positions 18–129 (EFIPKEVHFY…IKNIRKHKVV (112 aa)) are N-terminal domain. Residues 164–257 (HLWDFVNRDK…FAPQFCNLVF (94 aa)) form the PAZ domain. The interval 213-218 (HIIKYY) is binds 3'-end of gDNA. Residues 346-488 (DVPEIIRNKN…QIMGKLGIKY (143 aa)) are mid domain. One can recognise a Piwi domain in the interval 426 to 699 (CFALIIGKEK…FVKALGKNWK (274 aa)). Gln-457, Gln-479, and Lys-483 together coordinate a divalent metal cation. The segment at 457–460 (QNIL) is binds 5'-phosphorylated end of gDNA. Active-site residues include Asp-504, Glu-541, and Asp-570. Asp-504 is a binding site for Mn(2+). Asp-570 contacts Mn(2+). 2 binds 5'-phosphorylated end of gDNA regions span residues 625–632 (HKTPFGSN) and 678–679 (LR). Residue Asp-688 is part of the active site. The Mn(2+) site is built by Asp-688 and Ile-713.

This sequence belongs to the argonaute family. Long pAgo subfamily. A divalent metal cation serves as cofactor.

With respect to regulation, DNA cleavage is inhibited by EDTA. A DNA-guided ssDNA endonuclease that may play a role in defense against invading genetic elements. Uses short ssDNA sequences as guides (gDNA) to bind complementary target strands, resulting in slicing of the target DNA (tDNA). Endonucleolytically cleaves tDNA (the gDNA indicates where to cleave); two major and two minor products are seen which correspond to cleavage sites between nucleotides 9/10, 10/11, 13/14, and 14/15 downstream of the target residue base-paired with the 5'-end of the gDNA. Efficient guide-dependent tDNA cleavage requires a minimal length of 15 bp and is maximal at 19 bp. Prefers gDNA with 5'-phosphorylated purines and 3'-pyrimidines; changing these bases alters the cleavage activity and patterns. Also has guide-independent activity on tDNA called 'chopping'. Probably a first round of guide-independent activity on an invading plasmid or virus would generate guide DNAs for subsequent, more efficient, guide-dependent degradation of invading nucleic acids. Has no activity on substrate with a mismatch at positions 10 and 11, on ssDNA or RNA, nor on DNA:RNA hybrids. Digests longer (750 bp) dsDNA as well as circular plasmid and naked genomic DNA, but not chromatin, in a guide DNA-independent manner. Addition of endogenous histone A3 protects DNA from cleavage, while cleavage is insensitive to methylation. When plasmid encoding active or mutated protein (Ala-541) is transformed into Sulfolobus acidocaldarius about 25-fold fewer transformants are found with active protein; reduced levels of plasmid are found in wild-type transformed cells. While S.acidocaldarius grows at a similar temperature to M.jannaschii (70 to 80 degrees Celsius) it has very different histone-like proteins, which presumably do not protect against MjAgo. Binds ssDNA, dsDNA and DNA-RNA hybrids; binding is most efficient with dsDNA. The chain is Protein argonaute from Methanocaldococcus jannaschii (strain ATCC 43067 / DSM 2661 / JAL-1 / JCM 10045 / NBRC 100440) (Methanococcus jannaschii).